The primary structure comprises 374 residues: Methylthioribose-1-phosphate isomerase (374 aa).

Catalysis depends on D251, which acts as the Proton donor.

Belongs to the eIF-2B alpha/beta/delta subunits family. MtnA subfamily.

Its subcellular location is the cytoplasm. The protein resides in the nucleus. The enzyme catalyses 5-(methylsulfanyl)-alpha-D-ribose 1-phosphate = 5-(methylsulfanyl)-D-ribulose 1-phosphate. Its pathway is amino-acid biosynthesis; L-methionine biosynthesis via salvage pathway; L-methionine from S-methyl-5-thio-alpha-D-ribose 1-phosphate: step 1/6. Its function is as follows. Catalyzes the interconversion of methylthioribose-1-phosphate (MTR-1-P) into methylthioribulose-1-phosphate (MTRu-1-P). In Oryza sativa subsp. japonica (Rice), this protein is Methylthioribose-1-phosphate isomerase (IDI2).